Reading from the N-terminus, the 200-residue chain is Probable molybdenum cofactor guanylyltransferase (200 aa).

GTP is bound by residues 9-11, K21, D69, and D100; that span reads LAG. D100 provides a ligand contact to Mg(2+).

It belongs to the MobA family. Requires Mg(2+) as cofactor.

The protein resides in the cytoplasm. The catalysed reaction is Mo-molybdopterin + GTP + H(+) = Mo-molybdopterin guanine dinucleotide + diphosphate. Functionally, transfers a GMP moiety from GTP to Mo-molybdopterin (Mo-MPT) cofactor (Moco or molybdenum cofactor) to form Mo-molybdopterin guanine dinucleotide (Mo-MGD) cofactor. The protein is Probable molybdenum cofactor guanylyltransferase of Bacillus cereus (strain ATCC 10987 / NRS 248).